The chain runs to 548 residues: MASAAVANYEEEIVRPVADFSPSLWGDQFLSFSIKNQVAEKYAKEIEALKEQTRNMLLATGMKLADTLNLIDTIERLGISYHFEKEIDDILDQIYNQNSNCNDLCTSALQFRLLRQHGFNISPEIFSKFQDENGKFKESLASDVLGLLNLYEASHVRTHADDILEDALAFSTIHLESAAPHLKSPLREQVTHALEQCLHKGVPRVETRFFISSIYDKEQSKNNVLLRFAKLDFNLLQMLHKQELAQVSRWWKDLDFVTTLPYARDRVVECYFWALGVYFEPQYSQARVMLVKTISMISIVDDTFDAYGTVKELEAYTDAIQRWDINEIDRLPDYMKISYKAILDLYKDYEKELSSAGRSHIVCHAIERMKEVVRNYNVESTWFIEGYTPPVSEYLSNALATTTYYYLATTSYLGMKSATEQDFEWLSKNPKILEASVIICRVIDDTATYEVEKSRGQIATGIECCMRDYGISTKEAMAKFQNMAETAWKDINEGLLRPTPVSTEFLTPILNLARIVEVTYIHNLDGYTHPEKVLKPHIINLLVDSIKI.

Positions 264, 301, 305, 441, and 444 each coordinate (2E,6E)-farnesyl diphosphate. Mg(2+) contacts are provided by aspartate 301 and aspartate 305. Positions 301-305 (DDTFD) match the DDXXD motif motif. The Mg(2+) site is built by aspartate 444, aspartate 445, threonine 448, and glutamate 452.

It belongs to the terpene synthase family. Monomer. It depends on Mg(2+) as a cofactor. Post-translationally, self-alkylated at Tyr-520 in the presence of (2Z,6E)-farnesyl diphosphate ((Z,E)-FPP). Self-alkylated at Asp-444 at warm temperature (42 degrees Celsius) in the presence of (2E,6E)-farnesyl diphosphate ((E,E)-FPP).

The protein localises to the cytoplasm. It carries out the reaction (2E,6E)-farnesyl diphosphate = (+)-5-epi-aristolochene + diphosphate. The catalysed reaction is (2Z,6E)-farnesyl diphosphate = (+)-2-epi-prezizaene + diphosphate. It catalyses the reaction (2Z,6E)-farnesyl diphosphate = (-)-alpha-cedrene + diphosphate. The enzyme catalyses (2Z,6E)-farnesyl diphosphate = (-)-beta-curcumene + diphosphate. Its pathway is secondary metabolite biosynthesis; terpenoid biosynthesis. With respect to regulation, inhibited activity toward farnesyl diphosphate (FPP) by anilinogeranyl diphosphate (AGPP); AGPP undergoes a cyclization event leading to the formation of a novel macrocyclic paracyclophane alkaloid. Repressed by sesquilavandulyl diphosphate (SPP) via the induction of self-alkyation. Functionally, catalyzes the cyclization of trans,trans-farnesyl diphosphate (FPP) to the bicyclic intermediate 5-epi-aristolochene, initial step in the conversion of FPP to the sesquiterpenoid antifungal phytoalexin capsidiol. Produces germacrene A as an enzyme-bound intermediate that is not released by the enzyme, but is further cyclized to produce the bicyclic 5-epi-aristolochene. Mediates, at low levels, the formation of 4-epi-eremophilene and premnaspirodiene from trans,trans-farnesyl diphosphate. Also mediates the conversion of cis,trans-farnesyl diphosphate to cisoid minor products such as (+)-2-epi-prezizaene, (-)-alpha-cedrene and, to a lesser extent, (-)-beta-curcumene; also produces, at low levels, alpha-acoradiene and 4-epi-alpha-acoradiene, but barely nerolidol, alpha-bisabolol, epi-alpha-bisabolol and cis-farnesol. The protein is 5-epi-aristolochene synthase (EAS3) of Nicotiana tabacum (Common tobacco).